Consider the following 469-residue polypeptide: UDP-N-acetylmuramate--L-alanine ligase (469 aa).

118–124 contributes to the ATP binding site; that stretch reads GTHGKTT.

Belongs to the MurCDEF family.

Its subcellular location is the cytoplasm. The catalysed reaction is UDP-N-acetyl-alpha-D-muramate + L-alanine + ATP = UDP-N-acetyl-alpha-D-muramoyl-L-alanine + ADP + phosphate + H(+). The protein operates within cell wall biogenesis; peptidoglycan biosynthesis. Functionally, cell wall formation. In Lachnoclostridium phytofermentans (strain ATCC 700394 / DSM 18823 / ISDg) (Clostridium phytofermentans), this protein is UDP-N-acetylmuramate--L-alanine ligase.